A 416-amino-acid polypeptide reads, in one-letter code: 4-hydroxy-3-methylbut-2-en-1-yl diphosphate synthase (flavodoxin) (416 aa).

[4Fe-4S] cluster contacts are provided by Cys-304, Cys-307, Cys-350, and Glu-357.

Belongs to the IspG family. Requires [4Fe-4S] cluster as cofactor.

The enzyme catalyses (2E)-4-hydroxy-3-methylbut-2-enyl diphosphate + oxidized [flavodoxin] + H2O + 2 H(+) = 2-C-methyl-D-erythritol 2,4-cyclic diphosphate + reduced [flavodoxin]. The protein operates within isoprenoid biosynthesis; isopentenyl diphosphate biosynthesis via DXP pathway; isopentenyl diphosphate from 1-deoxy-D-xylulose 5-phosphate: step 5/6. Its function is as follows. Converts 2C-methyl-D-erythritol 2,4-cyclodiphosphate (ME-2,4cPP) into 1-hydroxy-2-methyl-2-(E)-butenyl 4-diphosphate. This chain is 4-hydroxy-3-methylbut-2-en-1-yl diphosphate synthase (flavodoxin), found in Rhizobium etli (strain CIAT 652).